We begin with the raw amino-acid sequence, 273 residues long: Cyclic di-AMP synthase CdaA (273 aa).

Transmembrane regions (helical) follow at residues leucine 12–isoleucine 32, leucine 40–serine 60, and threonine 61–phenylalanine 81. One can recognise a DAC domain in the interval glutamine 82–glutamate 242.

The protein belongs to the adenylate cyclase family. DacA/CdaA subfamily. As to quaternary structure, probably a homodimer. Interacts with CdaR. May interact with GlmM.

It localises to the cell membrane. It carries out the reaction 2 ATP = 3',3'-c-di-AMP + 2 diphosphate. DAC activity is stimulated about 20-fold in E.coli by coexpression with CdaR. One of 3 paralogous diadenylate cyclases (DAC) in this bacteria, catalyzing the condensation of 2 ATP molecules into cyclic di-AMP (c-di-AMP). Upon expression in E.coli leads to c-di-AMP synthesis. Probably the main producer of c-di-AMP for the cell; is probably implicated in control of peptidoglycan synthesis. In B.subtilis c-di-AMP is a second messenger that mediates growth, DNA repair and cell wall homeostasis; it is toxic when present in excess. This is Cyclic di-AMP synthase CdaA from Bacillus subtilis (strain 168).